The following is a 271-amino-acid chain: Type III pantothenate kinase (271 aa).

An ATP-binding site is contributed by 6–13 (DVRNTHTV). 109-112 (GADR) contributes to the substrate binding site. The active-site Proton acceptor is Asp-111. Asp-131 contacts K(+). Ser-134 contributes to the ATP binding site. Residue Thr-186 participates in substrate binding.

Belongs to the type III pantothenate kinase family. As to quaternary structure, homodimer. NH4(+) is required as a cofactor. It depends on K(+) as a cofactor.

It is found in the cytoplasm. The enzyme catalyses (R)-pantothenate + ATP = (R)-4'-phosphopantothenate + ADP + H(+). The protein operates within cofactor biosynthesis; coenzyme A biosynthesis; CoA from (R)-pantothenate: step 1/5. In terms of biological role, catalyzes the phosphorylation of pantothenate (Pan), the first step in CoA biosynthesis. This Mycobacterium avium (strain 104) protein is Type III pantothenate kinase.